We begin with the raw amino-acid sequence, 550 residues long: Dihydroxy-acid dehydratase (550 aa).

D81 lines the Mg(2+) pocket. Residue C122 coordinates [2Fe-2S] cluster. Mg(2+) is bound by residues D123 and K124. K124 is subject to N6-carboxylysine. Residue C194 coordinates [2Fe-2S] cluster. E442 serves as a coordination point for Mg(2+). The active-site Proton acceptor is the S467.

It belongs to the IlvD/Edd family. As to quaternary structure, homodimer. [2Fe-2S] cluster is required as a cofactor. It depends on Mg(2+) as a cofactor.

It carries out the reaction (2R)-2,3-dihydroxy-3-methylbutanoate = 3-methyl-2-oxobutanoate + H2O. The catalysed reaction is (2R,3R)-2,3-dihydroxy-3-methylpentanoate = (S)-3-methyl-2-oxopentanoate + H2O. Its pathway is amino-acid biosynthesis; L-isoleucine biosynthesis; L-isoleucine from 2-oxobutanoate: step 3/4. It functions in the pathway amino-acid biosynthesis; L-valine biosynthesis; L-valine from pyruvate: step 3/4. Functions in the biosynthesis of branched-chain amino acids. Catalyzes the dehydration of (2R,3R)-2,3-dihydroxy-3-methylpentanoate (2,3-dihydroxy-3-methylvalerate) into 2-oxo-3-methylpentanoate (2-oxo-3-methylvalerate) and of (2R)-2,3-dihydroxy-3-methylbutanoate (2,3-dihydroxyisovalerate) into 2-oxo-3-methylbutanoate (2-oxoisovalerate), the penultimate precursor to L-isoleucine and L-valine, respectively. The chain is Dihydroxy-acid dehydratase from Methanoregula boonei (strain DSM 21154 / JCM 14090 / 6A8).